The sequence spans 320 residues: Metapyrocatechase 2 (320 aa).

2 disordered regions span residues 1–21 and 131–153; these read MDTHRADASQRSQAPAARPRH and GPKTSPSSKSPARLEGAPGGQRG. VOC domains lie at 25–131 and 167–282; these read SIDH…VKIG and RLSH…YSAD. Fe cation contacts are provided by H170, H227, and E278.

The protein belongs to the extradiol ring-cleavage dioxygenase family. It depends on Fe(2+) as a cofactor.

It catalyses the reaction catechol + O2 = (2Z,4E)-2-hydroxy-6-oxohexa-2,4-dienoate + H(+). In Cupriavidus necator (Alcaligenes eutrophus), this protein is Metapyrocatechase 2 (mcpII).